The following is a 153-amino-acid chain: Transcription antitermination protein NusB (153 aa).

The protein belongs to the NusB family.

Functionally, involved in transcription antitermination. Required for transcription of ribosomal RNA (rRNA) genes. Binds specifically to the boxA antiterminator sequence of the ribosomal RNA (rrn) operons. This is Transcription antitermination protein NusB from Nitratidesulfovibrio vulgaris (strain ATCC 29579 / DSM 644 / CCUG 34227 / NCIMB 8303 / VKM B-1760 / Hildenborough) (Desulfovibrio vulgaris).